We begin with the raw amino-acid sequence, 330 residues long: PDZ and LIM domain protein 4 (330 aa).

The region spanning Met-1–Glu-84 is the PDZ domain. Disordered regions lie at residues Asp-104–Ala-153 and Glu-219–Leu-242. Ser-107, Ser-111, Ser-115, Ser-118, Ser-119, Ser-124, and Ser-134 each carry phosphoserine. Residues Gln-108–Gly-122 show a composition bias toward polar residues. The LIM zinc-binding domain occupies Cys-255–His-305.

As to quaternary structure, homodimer. Interacts (via C-terminus only or via combined C-terminus and LIM domain, but not LIM domain only) with PTPN13 (via the second or fourth PDZ domains). Found in a complex with PTPN13 and TRIP6. Interacts (via PDZ domain) with ACTN1 and ACTN2 (via C-terminal SDL residues). Interacts (via PDZ domain) with TRIP6 (via the second LIM domain or via the third LIM domain plus C-terminus). Interacts (via LIM domain) with GRIA1 (via C-terminus); this interaction as well as the interaction with alpha-actinin is required for their colocalization in early endosomes. Interacts with PDLIM1. Forms (via LIM domain) a heterodimer with PDLIM3. Interacts directly with SRC (via kinase domain and to a lesser extent the SH2 domain). Phosphorylated on tyrosine residue(s). Can be dephosphorylated by PTPN13. Expressed in several non-muscle tissues including lung, brain, ovary and uterus, and especially in epithelial cells at 14 dpc. In the uterus, high expression in the glandular epithelium, but absent in the simple columnar epithelium lining the uterus cavity.

It localises to the cytoplasm. The protein resides in the cytoskeleton. Its subcellular location is the cell projection. The protein localises to the dendritic spine. It is found in the early endosome membrane. It localises to the recycling endosome membrane. The protein resides in the nucleus. Its subcellular location is the perinuclear region. The protein localises to the lamellipodium. It is found in the synapse. It localises to the synaptosome. Functionally, suppresses SRC activation by recognizing and binding to active SRC and facilitating PTPN13-mediated dephosphorylation of SRC 'Tyr-419' leading to its inactivation. Inactivated SRC dissociates from this protein allowing the initiation of a new SRC inactivation cycle. Involved in reorganization of the actin cytoskeleton. In nonmuscle cells, binds to ACTN1 (alpha-actinin-1), increases the affinity of ACTN1 to F-actin (filamentous actin), and promotes formation of actin stress fibers. Involved in regulation of the synaptic AMPA receptor transport in dendritic spines of hippocampal pyramidal neurons directing the receptors toward an insertion at the postsynaptic membrane. Links endosomal surface-internalized GRIA1-containing AMPA receptors to the alpha-actinin/actin cytoskeleton. Increases AMPA receptor-mediated excitatory postsynaptic currents in neurons. In Mus musculus (Mouse), this protein is PDZ and LIM domain protein 4 (Pdlim4).